Consider the following 125-residue polypeptide: 17 kDa gas vesicle protein (125 aa).

This sequence belongs to the gas vesicle GvpC family.

The protein localises to the gas vesicle. Gas vesicles (GV) are hollow, gas filled proteinaceous nanostructures. During planktonic growth they allow positioning of the organism at a favorable depth for light or nutrient acquisition. The sequence is that of 17 kDa gas vesicle protein from Dactylococcopsis salina (strain PCC 8305) (Myxobactron salinum).